A 203-amino-acid polypeptide reads, in one-letter code: Urease accessory protein UreG (203 aa).

14–21 (GPVGSGKT) is a binding site for GTP.

Belongs to the SIMIBI class G3E GTPase family. UreG subfamily. Homodimer. UreD, UreF and UreG form a complex that acts as a GTP-hydrolysis-dependent molecular chaperone, activating the urease apoprotein by helping to assemble the nickel containing metallocenter of UreC. The UreE protein probably delivers the nickel.

The protein localises to the cytoplasm. Functionally, facilitates the functional incorporation of the urease nickel metallocenter. This process requires GTP hydrolysis, probably effectuated by UreG. The protein is Urease accessory protein UreG of Rhizobium etli (strain ATCC 51251 / DSM 11541 / JCM 21823 / NBRC 15573 / CFN 42).